Reading from the N-terminus, the 402-residue chain is Pentalenic acid synthase (402 aa).

A disordered region spans residues 1–28; the sequence is MTEPGTSVSAPVAFPQDRTCPYDPPTAY. C351 is a heme binding site.

This sequence belongs to the cytochrome P450 family. Requires heme as cofactor.

It carries out the reaction 1-deoxypentalenate + reduced 2[4Fe-4S]-[ferredoxin] + O2 + 2 H(+) = pentalenate + oxidized 2[4Fe-4S]-[ferredoxin] + H2O. It functions in the pathway antibiotic biosynthesis; neopentalenolactone biosynthesis. Its function is as follows. Catalyzes the conversion of 1-deoxypentalenic acid to pentalenic acid in the biosynthesis of neopentalenolactone antibiotic. In Streptomyces avermitilis (strain ATCC 31267 / DSM 46492 / JCM 5070 / NBRC 14893 / NCIMB 12804 / NRRL 8165 / MA-4680), this protein is Pentalenic acid synthase (cyp28).